A 2462-amino-acid chain; its full sequence is Serine/threonine-protein kinase Wnk (2462 aa).

Disordered stretches follow at residues 18 to 133, 146 to 248, and 365 to 461; these read NRAR…ASKS, NTLP…KSSS, and EDDV…DDDP. Composition is skewed to polar residues over residues 29–58 and 65–78; these read DGTTSCTTQPQRNTSISSEEQTVQGANIQK and NRSASSRQKPNPTS. The span at 94 to 124 shows a compositional bias: low complexity; the sequence is TLSAHTSTSSTTSIQSSPIEPASSLPTLNTT. A compositionally biased stretch (polar residues) spans 146 to 155; sequence NTLPGKTASS. Composition is skewed to basic and acidic residues over residues 190 to 205, 237 to 247, and 396 to 413; these read QSREQNEDEMDSKIEP, DTKKMEARKSS, and QSEKQAKSFDDITKKAES. Low complexity predominate over residues 414 to 452; that stretch reads SEASAEEAAVTGSSTDASASPLPSTSLVSTTSSATSITK. Residues 471-729 form the Protein kinase domain; it reads FKYDKEVGRG…CNELLESEFF (259 aa). Residues S481, 551–554, and K601 each bind ATP; that span reads TELM. Catalysis depends on D618, which acts as the Proton acceptor. S628 and S632 each carry phosphoserine; by autocatalysis. Disordered stretches follow at residues 844-873, 893-923, and 1006-1055; these read LQKQRESLPTNVDEDEEEEEESEDEEDGVK, LALSTNSVEPQQLSTRSNTSIPNSGIQQPVQ, and PQQQ…LQQQ. Acidic residues predominate over residues 855 to 870; the sequence is VDEDEEEEEESEDEED. Residues 893-918 are compositionally biased toward polar residues; sequence LALSTNSVEPQQLSTRSNTSIPNSGI. Low complexity-rich tracts occupy residues 1006–1034 and 1041–1055; these read PQQQVNQQQQQPQMMQQIPQQVQVQQPQT and HEQQPQQQQQPLQQQ. A coiled-coil region spans residues 1142–1178; the sequence is AQHQLQQLQQQQLQQQQLQQQQQIQQQQLQQQQLQQQ. Polar residues predominate over residues 1236-1251; sequence QGGQVTLSDAQQQQHP. 9 disordered regions span residues 1236 to 1256, 1322 to 1382, 1418 to 1465, 1554 to 1578, 1615 to 1699, 1762 to 1790, 1828 to 1895, 1929 to 1966, and 2122 to 2229; these read QGGQVTLSDAQQQQHPGFSAV, QQQQ…EQIS, GALE…PKLS, LTRQRSTFRSHQRHRSRDETASDIT, NIPN…KDKK, DTSENAQQATEAEAEKPKDKSGQAVGNQG, QASP…SVGS, HEKQLSKQPSLEKPSATSILTNNSDPPQRNPSNGSINQ, and THVQ…FIQS. The span at 1559-1568 shows a compositional bias: basic residues; the sequence is STFRSHQRHR. A compositionally biased stretch (low complexity) spans 1627 to 1641; sequence STPPTTTSTMSSSST. Positions 1642-1674 are enriched in polar residues; sequence ASRDAPNSSNDVTIGSGSVSRKTSTASEYTSLS. Polar residues-rich tracts occupy residues 1828-1852, 1861-1894, and 1943-1966; these read QASPAMSSLKATSGQPQTQEITKPN, SVGQNTPTAALTSARGSGSSVYNSRRTSIDNSVG, and SATSILTNNSDPPQRNPSNGSINQ. Low complexity predominate over residues 2125–2136; the sequence is QQPSNLQPQQQS. Over residues 2137–2160 the composition is skewed to polar residues; it reads VHPNMTQQPQQTPLNGHPSMVNTL. Over residues 2161–2211 the composition is skewed to low complexity; the sequence is QQQPPQQSLPMQTIQSQQQQHNQMPIISQQQQQQILMQQQQQQGSQQGSQQ. The span at 2212-2229 shows a compositional bias: polar residues; it reads FNLPGTQQTHPQHQFIQS.

The protein belongs to the protein kinase superfamily. Ser/Thr protein kinase family. WNK subfamily. Mg(2+) serves as cofactor. Autophosphorylated. Autophosphorylation at Ser-628 and Ser-632 promotes its activity.

It is found in the cytoplasm. It carries out the reaction L-seryl-[protein] + ATP = O-phospho-L-seryl-[protein] + ADP + H(+). The enzyme catalyses L-threonyl-[protein] + ATP = O-phospho-L-threonyl-[protein] + ADP + H(+). With respect to regulation, activated in response to hyperosmotic stress: cell shrinkage promotes formation of a membraneless compartment that concentrates wnk-1 with its downstrem substrates. Activation requires autophosphorylation. Autophosphorylation and subsequent activation is inhibited by increases in intracellular Cl(-) or K(+). In terms of biological role, serine/threonine-protein kinase component of the WNK-SPAK/OSR1 kinase cascade, which plays an important role in the regulation of electrolyte homeostasis and regulatory volume increase in response to hyperosmotic stress. Wnk mediates regulatory volume increase in response to hyperosmotic stress by acting as a molecular crowding sensor, which senses cell shrinkage and mediates formation of a membraneless compartment by undergoing liquid-liquid phase separation. The membraneless compartment concentrates Wnk with its substrate Fray, promoting Wnk-dependent phosphorylation and activation of downstream kinase Fray. Following activation, Fray catalyzes phosphorylation of ion cotransporters Ncc69 and Irk1, regulating their activity. Phosphorylation of Na-K-Cl cotransporter Ncc69 promotes its activation and ion influx. Involved in circadian rhythms in small ventral lateral (sLNv) pacemaker neurons: in the morning, Wnk activity is repressed by high levels of intracellular chloride; in contrast Wnk activation in the evening promotes the activation of the inwardly rectifying potassium channel Irk1 via Fray. Acts as a positive regulator of the canonical Wnt signaling pathway during wing disk development. In Drosophila melanogaster (Fruit fly), this protein is Serine/threonine-protein kinase Wnk.